The following is a 442-amino-acid chain: Glutamate--methylamine ligase (442 aa).

A GS beta-grasp domain is found at 13–97 (NQVKYILAQF…IACDGHTHGK (85 aa)). One can recognise a GS catalytic domain in the interval 103-442 (TRVVLKKQLE…WEVNSYLEFF (340 aa)).

It belongs to the glutamine synthetase family. Type 3 subfamily. Mg(2+) is required as a cofactor.

The enzyme catalyses methylamine + L-glutamate + ATP = N(5)-methyl-L-glutamine + ADP + phosphate + H(+). Catalyzes the formation of N(5)-methyl-L-glutamine from glutamate and methylamine. This Methyloversatilis universalis (strain ATCC BAA-1314 / DSM 25237 / JCM 13912 / CCUG 52030 / FAM5) protein is Glutamate--methylamine ligase.